We begin with the raw amino-acid sequence, 1038 residues long: SEH-associated protein 4 (1038 aa).

A WD 1 repeat occupies 50–90; it reads KDFGSITCLDYSESEIGMIGVGEKNGYLRIFNISGQNSSSP. 2 positions are modified to phosphoserine: serine 123 and serine 136. WD repeat units lie at residues 147–189, 235–276, and 544–587; these read KKQR…DSHE, QHPT…DQAS, and NTWR…SNQD.

The protein belongs to the WD repeat mio family. As to quaternary structure, component of the SEA complex composed of at least IML1/SEA1, RTC1/SEA2, MTC5/SEA3, NPR2, NPR3, SEA4, SEC13 and SEH1.

Its subcellular location is the cytoplasm. It is found in the vacuole membrane. Component of the SEA complex which coats the vacuolar membrane and is involved in intracellular trafficking, autophagy, response to nitrogen starvation, and amino acid biogenesis. In Saccharomyces cerevisiae (strain ATCC 204508 / S288c) (Baker's yeast), this protein is SEH-associated protein 4 (SEA4).